Here is a 181-residue protein sequence, read N- to C-terminus: MKQKKVFVVWLTGVSGAGKSTLANLLKQQLDARGLRTYLLDGDTLRNGLNQDLGFSDADRRENIRRTAEVARLMMDAGFIVIAALISPFRDARSRARARFAPGTFIEVFVDVALEVAEARDPKGLYVLARQGAIPQFTGIGSAYENPLSPEVHVRTAETSPSECIATIMQKLPLDTDVGAP.

G13–S20 contacts ATP. S87 functions as the Phosphoserine intermediate in the catalytic mechanism.

It belongs to the APS kinase family.

It carries out the reaction adenosine 5'-phosphosulfate + ATP = 3'-phosphoadenylyl sulfate + ADP + H(+). The protein operates within sulfur metabolism; hydrogen sulfide biosynthesis; sulfite from sulfate: step 2/3. Its function is as follows. Catalyzes the synthesis of activated sulfate. The polypeptide is Adenylyl-sulfate kinase (Burkholderia ambifaria (strain ATCC BAA-244 / DSM 16087 / CCUG 44356 / LMG 19182 / AMMD) (Burkholderia cepacia (strain AMMD))).